Consider the following 174-residue polypeptide: Probasin (174 aa).

An N-terminal signal peptide occupies residues methionine 1–serine 18. A disulfide bond links cysteine 77 and cysteine 168.

This sequence belongs to the calycin superfamily. Lipocalin family.

Its subcellular location is the secreted. This is Probasin (Pbsn) from Mus musculus (Mouse).